A 393-amino-acid polypeptide reads, in one-letter code: S-adenosylmethionine synthase 3 (393 aa).

Glu9 contacts Mg(2+). His15 contributes to the ATP binding site. Position 43 (Glu43) interacts with K(+). L-methionine contacts are provided by Glu56 and Gln99. ATP contacts are provided by residues 167 to 169 (DGK), 235 to 238 (SGRF), Asp246, 252 to 253 (RK), Ala269, Lys273, and Lys277. An L-methionine-binding site is contributed by Asp246. Lys277 is an L-methionine binding site.

Belongs to the AdoMet synthase family. In terms of assembly, homotetramer. The cofactor is Mn(2+). Requires Mg(2+) as cofactor. Co(2+) serves as cofactor. It depends on K(+) as a cofactor.

The protein resides in the cytoplasm. It carries out the reaction L-methionine + ATP + H2O = S-adenosyl-L-methionine + phosphate + diphosphate. It functions in the pathway amino-acid biosynthesis; S-adenosyl-L-methionine biosynthesis; S-adenosyl-L-methionine from L-methionine: step 1/1. Catalyzes the formation of S-adenosylmethionine from methionine and ATP. The reaction comprises two steps that are both catalyzed by the same enzyme: formation of S-adenosylmethionine (AdoMet) and triphosphate, and subsequent hydrolysis of the triphosphate. This Petunia hybrida (Petunia) protein is S-adenosylmethionine synthase 3 (SAM3).